Consider the following 89-residue polypeptide: Acylphosphatase (89 aa).

Positions 3–89 (ALEIYVSGNV…ENYESFEVAY (87 aa)) constitute an Acylphosphatase-like domain. Residues R18 and N36 contribute to the active site.

It belongs to the acylphosphatase family.

It catalyses the reaction an acyl phosphate + H2O = a carboxylate + phosphate + H(+). In Archaeoglobus fulgidus (strain ATCC 49558 / DSM 4304 / JCM 9628 / NBRC 100126 / VC-16), this protein is Acylphosphatase (acyP).